Consider the following 309-residue polypeptide: Aspartate carbamoyltransferase catalytic subunit (309 aa).

Residues Arg-58 and Thr-59 each coordinate carbamoyl phosphate. L-aspartate is bound at residue Lys-86. Carbamoyl phosphate-binding residues include Arg-108, His-136, and Gln-139. L-aspartate is bound by residues Arg-170 and Arg-224. Carbamoyl phosphate is bound by residues Gly-266 and Pro-267.

The protein belongs to the aspartate/ornithine carbamoyltransferase superfamily. ATCase family. In terms of assembly, heterododecamer (2C3:3R2) of six catalytic PyrB chains organized as two trimers (C3), and six regulatory PyrI chains organized as three dimers (R2).

It carries out the reaction carbamoyl phosphate + L-aspartate = N-carbamoyl-L-aspartate + phosphate + H(+). The protein operates within pyrimidine metabolism; UMP biosynthesis via de novo pathway; (S)-dihydroorotate from bicarbonate: step 2/3. Its function is as follows. Catalyzes the condensation of carbamoyl phosphate and aspartate to form carbamoyl aspartate and inorganic phosphate, the committed step in the de novo pyrimidine nucleotide biosynthesis pathway. The polypeptide is Aspartate carbamoyltransferase catalytic subunit (Campylobacter curvus (strain 525.92)).